The primary structure comprises 383 residues: Homoserine O-acetyltransferase (383 aa).

One can recognise an AB hydrolase-1 domain in the interval 52–362 (NAILVCHALT…PWGHDAFLLD (311 aa)). Ser158 functions as the Nucleophile in the catalytic mechanism. Arg227 serves as a coordination point for substrate. Residues Asp323 and His356 contribute to the active site. Asp357 lines the substrate pocket.

The protein belongs to the AB hydrolase superfamily. MetX family. In terms of assembly, homodimer.

It is found in the cytoplasm. The catalysed reaction is L-homoserine + acetyl-CoA = O-acetyl-L-homoserine + CoA. It functions in the pathway amino-acid biosynthesis; L-methionine biosynthesis via de novo pathway; O-acetyl-L-homoserine from L-homoserine: step 1/1. In terms of biological role, transfers an acetyl group from acetyl-CoA to L-homoserine, forming acetyl-L-homoserine. In Symbiobacterium thermophilum (strain DSM 24528 / JCM 14929 / IAM 14863 / T), this protein is Homoserine O-acetyltransferase.